Here is a 564-residue protein sequence, read N- to C-terminus: Dicarboxylate transporter 2, chloroplastic (564 aa).

The N-terminal 22 residues, 1–22, are a transit peptide targeting the chloroplast; it reads MESLALLPTLSLSTTTTTSKAT. Residues 35 to 58 form a disordered region; it reads RRPHLSLSLSSTPKPTLTFSSHSH. The span at 39–58 shows a compositional bias: low complexity; sequence LSLSLSSTPKPTLTFSSHSH. A run of 12 helical transmembrane segments spans residues 94 to 114, 127 to 147, 166 to 186, 235 to 255, 262 to 282, 307 to 327, 356 to 376, 380 to 400, 415 to 435, 451 to 471, 484 to 504, and 538 to 558; these read GAKLIPLILSVSVGLLLRFAV, LLAIFLSTVAGLVLSPLPVGA, TAFCAFTNEVIWLIVISFFFA, AGGIFLPIIKSLSISSGSLPG, LGTYLIMTQFQSAGNSSALFL, VFWLKAASLPAFVALLLTPLI, VTKNEWVMVGTMLLAVSLWVF, IGVSSVVAAMLGLSVLLLLGV, TLAWFAVLVGMASQLTNLGIV, LSWPAAFGILQAAYFFVHYLF, AFLAMNIASGVPGVLAALALA, and MGFIMAVINATIWTVVGGVWW.

Belongs to the SLC13A/DASS transporter (TC 2.A.47) family. DIT1 subfamily. In terms of tissue distribution, expressed in leaves.

It is found in the plastid. The protein localises to the chloroplast inner membrane. Its function is as follows. Glutamate/malate translocator involved with DIT1 in primary ammonia assimilation and in the re-assimilation of ammonia generated by the photorespiratory pathway. Exports the end product of ammonia assimilation, glutamate, from plastids to the cytosol. The precursor for ammonia assimilation, 2-oxoglutarate, is imported from the cytosol by DIT1. This chain is Dicarboxylate transporter 2, chloroplastic (DIT2), found in Spinacia oleracea (Spinach).